The following is a 267-amino-acid chain: Mitochondrial S-adenosylmethionine carrier protein (267 aa).

Solcar repeat units follow at residues 4-77 (REFT…TKSV), 86-168 (LAPI…LKAV), and 177-265 (LDSW…VRRT). The next 6 membrane-spanning stretches (helical) occupy residues 5-25 (EFTASLVAGGCAGMCVDLTLF), 49-69 (IYAGVPSAAIGSFPNAAAFFV), 85-105 (NLAPITHMLAASLGEIVACLI), 142-162 (RGYGSTVLREIPFSLVQFPLW), 182-202 (AAVCGALAGGVAAFVTTPLDV), and 238-258 (FAGSIPRVMFISMGGFIFLGA).

The protein belongs to the mitochondrial carrier (TC 2.A.29) family.

The protein localises to the mitochondrion inner membrane. The catalysed reaction is S-adenosyl-L-homocysteine(out) + S-adenosyl-L-methionine(in) = S-adenosyl-L-homocysteine(in) + S-adenosyl-L-methionine(out). Its function is as follows. Mitochondrial S-adenosyl-L-methionine/S-adenosyl-L-homocysteine antiporter. Mediates the exchange of cytosolic S-adenosyl-L-methionine, the predominant methyl-group donor for macromolecule methylation processes, for mitochondrial S-adenosylhomocysteine(SAH), a by-product of methylation reactions. The protein is Mitochondrial S-adenosylmethionine carrier protein (slc25a26) of Danio rerio (Zebrafish).